The primary structure comprises 1087 residues: Synaptopodin-2 (1087 aa).

One can recognise a PDZ domain in the interval 6–88; sequence FICISMTGGA…SLHLLVKRPS (83 aa). Disordered regions lie at residues 24 to 52, 88 to 112, and 207 to 272; these read GKEE…EGDE, SSGT…HEGP, and GPIV…AGLP. Residues 101 to 112 show a composition bias toward basic and acidic residues; sequence TTNHQHLTHEGP. Composition is skewed to polar residues over residues 207–230 and 246–255; these read GPIV…SQLE and TSLTSSTSSG. Residues Ser-300, Ser-319, and Ser-320 each carry the phosphoserine modification. Positions 320–359 are disordered; sequence SEGTEHGEDQRSGKDQSRPHKHRARHARLRRSESLSEKQV. Basic and acidic residues predominate over residues 322–337; the sequence is GTEHGEDQRSGKDQSR. Position 323 is a phosphothreonine (Thr-323). The segment covering 338–348 has biased composition (basic residues); sequence PHKHRARHARL. The segment covering 349 to 359 has biased composition (basic and acidic residues); the sequence is RRSESLSEKQV. Positions 388–396 match the Nuclear localization signal motif; sequence KKRRRRARK. 4 positions are modified to phosphoserine: Ser-540, Ser-541, Ser-543, and Ser-546. An interaction with YWHAB region spans residues 551–557; sequence RSLASVP. Ser-555 carries the post-translational modification Phosphoserine; by PKA. Disordered stretches follow at residues 581 to 817 and 832 to 863; these read AKPF…ALNL and NYTP…GMSG. Residue Ser-596 is modified to Phosphoserine. Residues 599-804 are interaction with YWHAB; sequence RSVTSPISDF…AVSSIKIAQP (206 aa). Thr-602 bears the Phosphothreonine; by PKA and CaMK2 mark. Phosphoserine is present on Ser-603. Pro residues-rich tracts occupy residues 609-622 and 636-647; these read PAPP…PPPE and AQPPPWPQPAPW. The short motif at 611–614 is the PPPY motif element; it reads PPPY. Tyr-614 is subject to Phosphotyrosine. Position 618 is a phosphoserine (Ser-618). The tract at residues 656-796 is F-actin binding; the sequence is SEQIASRDER…PPNPPQVTAV (141 aa). Positions 656 to 909 are F-actin bundling activity; that stretch reads SEQIASRDER…LPASWKYSSN (254 aa). Interaction with ACTN2 stretches follow at residues 656-917 and 894-1087; these read SEQI…PPVA and QSPT…VVEE. Ser-697 and Ser-719 each carry phosphoserine. The segment at 740-893 is actin binding; the sequence is AKQKTPPPVA…DTVQAHTVRA (154 aa). Thr-744 carries the post-translational modification Phosphothreonine. Positions 751-777 are enriched in low complexity; that stretch reads KPAVKSPSSSQPVAPVSPVWSPGVAPA. A phosphoserine mark is found at Ser-767 and Ser-771. The span at 781–797 shows a compositional bias: polar residues; it reads AFSTSNPPNPPQVTAVS. Positions 803 to 1087 are interaction with FLNC; sequence QPAAPPARPA…QVWKPSVVEE (285 aa). 3 positions are modified to phosphoserine: Ser-895, Ser-899, and Ser-903. Disordered regions lie at residues 930-952, 970-1012, and 1037-1060; these read AIKS…KKPL, FTFQ…PTNA, and PVSA…STSY. An interaction with ZYX region spans residues 993-1012; that stretch reads PAMKQALPPRQANVGSPTNA. 2 positions are modified to phosphoserine: Ser-1008 and Ser-1050. Positions 1037-1051 are enriched in low complexity; sequence PVSASPVPVSVPTSP.

The protein belongs to the synaptopodin family. May self-associate in muscle cells under oxidative stress. Binds F-actin. Interacts with ACTN2; ACTN2 is proposed to anchor SYOP2 at Z lines in mature myocytes. Interacts with AKAP6, PPP3CA and CAMK2A. Interacts (phosphorylated form) with YWHAB; YWHAB competes with ACTN2 for interaction with SYNPO2. Interacts with KPNA2; mediating nuclear import of SYNOP2; dependent on interaction with YWHAB. Interacts with IPO13; may be implicated in SYNOP2 nuclear import. Interacts with ZYX, FLNC, ILK. Interacts with BAG3 (via WW 1 domain). May associate with the CASA complex consisting of HSPA8, HSPB8 and BAG3. Interacts with VPS18. In terms of processing, phosphorylated by PKA, and by CaMK2 at multiple sites. Dephosphorylated by calcineurin at Ser-555 and Thr-602; abrogating interaction with YWHAB and impairing nuclear import. Expressed in skeletal muscle, heart, colon, stomach, uterus and lung. Expression is restricted to muscle cell layers in colon, uterus and stomach.

The protein resides in the nucleus. It localises to the cytoplasm. The protein localises to the myofibril. It is found in the sarcomere. Its subcellular location is the z line. The protein resides in the cell junction. It localises to the focal adhesion. Has an actin-binding and actin-bundling activity. Can induce the formation of F-actin networks. At the sarcomeric Z lines is proposed to act as adapter protein that links nascent myofibers to the sarcolemma via ZYX and may play a role in early assembly and stabilization of the Z lines. Involved in autophagosome formation. May play a role in chaperone-assisted selective autophagy (CASA) involved in Z lines maintenance in striated muscle under mechanical tension; may link the client-processing CASA chaperone machinery to a membrane-tethering and fusion complex providing autophagosome membranes. Involved in regulation of cell migration. May be a tumor suppressor. The chain is Synaptopodin-2 (Synpo2) from Mus musculus (Mouse).